We begin with the raw amino-acid sequence, 456 residues long: Chromosomal replication initiator protein DnaA (456 aa).

Residues 1–83 (MTASLWQQCL…LRFDIGNRPH (83 aa)) form a domain I, interacts with DnaA modulators region. Residues 83 to 119 (HPVAVARAPARGADPVNNSQKSWESKAEAKPEPNHKS) are domain II. Positions 92 to 122 (ARGADPVNNSQKSWESKAEAKPEPNHKSNTN) are disordered. Basic and acidic residues predominate over residues 105–117 (WESKAEAKPEPNH). Residues 120 to 336 (NTNVNYTFEN…GALNRVIANA (217 aa)) are domain III, AAA+ region. The ATP site is built by glycine 164, glycine 166, lysine 167, and threonine 168. Residues 337–456 (NFTGRAINID…YSNLIRTLSS (120 aa)) are domain IV, binds dsDNA.

It belongs to the DnaA family. Oligomerizes as a right-handed, spiral filament on DNA at oriC.

It is found in the cytoplasm. In terms of biological role, plays an essential role in the initiation and regulation of chromosomal replication. ATP-DnaA binds to the origin of replication (oriC) to initiate formation of the DNA replication initiation complex once per cell cycle. Binds the DnaA box (a 9 base pair repeat at the origin) and separates the double-stranded (ds)DNA. Forms a right-handed helical filament on oriC DNA; dsDNA binds to the exterior of the filament while single-stranded (ss)DNA is stabiized in the filament's interior. The ATP-DnaA-oriC complex binds and stabilizes one strand of the AT-rich DNA unwinding element (DUE), permitting loading of DNA polymerase. After initiation quickly degrades to an ADP-DnaA complex that is not apt for DNA replication. Binds acidic phospholipids. In Aeromonas hydrophila subsp. hydrophila (strain ATCC 7966 / DSM 30187 / BCRC 13018 / CCUG 14551 / JCM 1027 / KCTC 2358 / NCIMB 9240 / NCTC 8049), this protein is Chromosomal replication initiator protein DnaA.